The chain runs to 753 residues: Pumilio homolog 23 (753 aa).

The tract at residues 1–84 (MVSVGSKSLP…SEFEHQNQFV (84 aa)) is disordered. Basic and acidic residues-rich tracts occupy residues 23–38 (MGER…ERNK), 47–57 (GNRGFDVDSSK), and 73–84 (KHSEFEHQNQFV). Pumilio repeat units follow at residues 123–158 (ETRG…SFIR), 159–198 (NSAS…SVIE), 206–244 (KVIV…ELYG), 284–325 (GLLS…EIIP), 345–380 (NVAK…EMFN), 381–418 (KVFK…IMWE), 526–563 (SMKA…RLII), and 564–599 (KLRG…AIAS). Positions 322-675 (EIIPLILRCN…DASEDAAQEI (354 aa)) constitute a PUM-HD domain. Composition is skewed to basic and acidic residues over residues 677–688 (VKNTRKEIDHHP), 699–712 (HAKD…GEKR), and 719–728 (KTSEATDKPK). Residues 677-753 (VKNTRKEIDH…KNRHSNKMRI (77 aa)) form a disordered region. Residues 744–753 (KNRHSNKMRI) are compositionally biased toward basic residues.

Its subcellular location is the nucleus. The protein localises to the nucleolus. Sequence-specific RNA-binding protein that regulates translation and mRNA stability by binding the 3'-UTR of target mRNAs. The polypeptide is Pumilio homolog 23 (APUM23) (Arabidopsis thaliana (Mouse-ear cress)).